The following is a 399-amino-acid chain: Probable peptidoglycan glycosyltransferase FtsW (399 aa).

A run of 9 helical transmembrane segments spans residues 33–53 (LVWL…STSI), 71–91 (IFYF…PIIF), 98–118 (IILI…HSIH), 160–180 (FWGF…LLAE), 182–202 (DLGT…LSGA), 204–224 (IGQF…LILL), 287–307 (IIGE…IFTI), 324–344 (IFSG…TSIN), and 359–379 (LPFI…IFFL).

Belongs to the SEDS family. FtsW subfamily.

Its subcellular location is the cell inner membrane. It catalyses the reaction [GlcNAc-(1-&gt;4)-Mur2Ac(oyl-L-Ala-gamma-D-Glu-L-Lys-D-Ala-D-Ala)](n)-di-trans,octa-cis-undecaprenyl diphosphate + beta-D-GlcNAc-(1-&gt;4)-Mur2Ac(oyl-L-Ala-gamma-D-Glu-L-Lys-D-Ala-D-Ala)-di-trans,octa-cis-undecaprenyl diphosphate = [GlcNAc-(1-&gt;4)-Mur2Ac(oyl-L-Ala-gamma-D-Glu-L-Lys-D-Ala-D-Ala)](n+1)-di-trans,octa-cis-undecaprenyl diphosphate + di-trans,octa-cis-undecaprenyl diphosphate + H(+). The protein operates within cell wall biogenesis; peptidoglycan biosynthesis. Its function is as follows. Peptidoglycan polymerase that is essential for cell division. The polypeptide is Probable peptidoglycan glycosyltransferase FtsW (Buchnera aphidicola subsp. Acyrthosiphon pisum (strain APS) (Acyrthosiphon pisum symbiotic bacterium)).